Reading from the N-terminus, the 782-residue chain is uncharacterized protein (782 aa).

A DNA-binding region (zn(2)-C6 fungal-type) is located at residues 22-50 (CRECHRLKLKCDRVWPCENCKKRGIPNLC). Disordered regions lie at residues 105–126 (GEKP…DPDH) and 645–665 (VPSS…AEKA). A compositionally biased stretch (basic and acidic residues) spans 654-665 (SPDDSSMRAEKA).

It is found in the nucleus. This is an uncharacterized protein from Schizosaccharomyces pombe (strain 972 / ATCC 24843) (Fission yeast).